We begin with the raw amino-acid sequence, 149 residues long: Putative inactive group IIC secretory phospholipase A2 (149 aa).

The first 18 residues, 1 to 18, serve as a signal peptide directing secretion; it reads MKVIAILTLLLFCSPTHS. 4 cysteine pairs are disulfide-bonded: C44–C142, C77–C107, C95–C112, and C97–C105. Ca(2+) contacts are provided by Y45, G47, and G49.

It belongs to the phospholipase A2 family. The cofactor is Ca(2+).

The protein resides in the secreted. Functionally, inactive phospholipase. The sequence is that of Putative inactive group IIC secretory phospholipase A2 (PLA2G2C) from Homo sapiens (Human).